The chain runs to 464 residues: Serine--tRNA synthetase-like protein Slimp (464 aa).

Belongs to the class-II aminoacyl-tRNA synthetase family. Type-1 seryl-tRNA synthetase subfamily.

The protein localises to the mitochondrion. In terms of biological role, essential protein which may play a role in mitochondrial morphogenesis and function. Has transfer RNA (tRNA)-binding activity and can bind tRNA(Ser) but does not have serine--tRNA ligase activity and does not bind ATP. The polypeptide is Serine--tRNA synthetase-like protein Slimp (Drosophila melanogaster (Fruit fly)).